A 360-amino-acid polypeptide reads, in one-letter code: Phenylalanine--tRNA ligase alpha subunit (360 aa).

Glu260 provides a ligand contact to Mg(2+).

The protein belongs to the class-II aminoacyl-tRNA synthetase family. Phe-tRNA synthetase alpha subunit type 1 subfamily. Tetramer of two alpha and two beta subunits. It depends on Mg(2+) as a cofactor.

The protein localises to the cytoplasm. It carries out the reaction tRNA(Phe) + L-phenylalanine + ATP = L-phenylalanyl-tRNA(Phe) + AMP + diphosphate + H(+). The chain is Phenylalanine--tRNA ligase alpha subunit from Bradyrhizobium sp. (strain BTAi1 / ATCC BAA-1182).